The chain runs to 337 residues: Methionyl-tRNA formyltransferase (337 aa).

110–113 (SLLP) is a (6S)-5,6,7,8-tetrahydrofolate binding site.

Belongs to the Fmt family.

It catalyses the reaction L-methionyl-tRNA(fMet) + (6R)-10-formyltetrahydrofolate = N-formyl-L-methionyl-tRNA(fMet) + (6S)-5,6,7,8-tetrahydrofolate + H(+). Its function is as follows. Attaches a formyl group to the free amino group of methionyl-tRNA(fMet). The formyl group appears to play a dual role in the initiator identity of N-formylmethionyl-tRNA by promoting its recognition by IF2 and preventing the misappropriation of this tRNA by the elongation apparatus. In Frankia casuarinae (strain DSM 45818 / CECT 9043 / HFP020203 / CcI3), this protein is Methionyl-tRNA formyltransferase.